The chain runs to 4776 residues: Pneumococcal serine-rich repeat protein (4776 aa).

The N-terminal stretch at 1–72 is a signal peptide; sequence MTETVEDKVS…VVLGTISTSN (72 aa). Residues Ser73, Ser75, Ser76, Ser78, Ser80, Ser82, Ser94, Ser100, Ser108, Ser110, Ser118, Ser120, and Ser121 are each glycosylated (O-linked (GlcNAc...) serine). The interval 73 to 121 is serine-rich repeat region 1, SRR1; the sequence is SASSTSLSASESASTSASESASTSASTSASTSASESASTSASTSISASS. The segment at 86–112 is disordered; sequence STSASESASTSASTSASTSASESASTS. The interval 122–166 is self aggregating domain; sequence TVVGSQTAAATEATAKKVEEDRKKPASDYVASVTNVNLQSYAKRR. The interval 122 to 394 is basic region, BR; sequence TVVGSQTAAA…QSKSLSVSAS (273 aa). Positions 164-168 match the Host furin cleavage recognition motif; the sequence is KRRKR. A keratin 10-binding domain, cell-type specific binding to lung-derived cells region spans residues 273–341; the sequence is TQTMLTLGSD…GYGLTSSWTV (69 aa). A serine-rich repeat region 2, SRR2 region spans residues 395 to 4712; the sequence is QSASASASTS…ASTSASASAS (4318 aa). 27 disordered regions span residues 481–627, 861–889, 925–965, 1052–1085, 1123–1153, 1171–1199, 1311–1357, 1671–1731, 1792–1863, 2105–2133, 2169–2209, 2296–2329, 2367–2397, 2415–2443, 2571–2631, 2737–2805, 2855–3113, 3347–3375, 3411–3451, 3538–3571, 3609–3639, 3657–3685, 3797–3843, 4167–4197, 4215–4243, 4355–4401, and 4706–4747; these read ASTS…STSA, ASASTSASESASTSASASASTSASESAST, ASAS…SASA, SASTSASESASTSASASASTSASESASTSASASA, ASASTSASESASTSTSASASTSASESASTSA, ASASTSASASASTSASASTSASESASTSA, ASES…SAST, ASES…SESA, SASE…STSA, ESAS…STSA, ASAS…STSA, and SASA…GTES. Over residues 4715–4747 the composition is skewed to polar residues; the sequence is VSNSANHSNSQVGNTSGSTGKSQKELPNTGTES. The LPXTG sorting signal motif lies at 4740 to 4744; that stretch reads LPNTG. Thr4743 is subject to Pentaglycyl murein peptidoglycan amidated threonine. Residues 4744–4776 constitute a propeptide, removed by sortase; sequence GTESSIGSVLLGVLAAVTGIGLVAKRRKRDEEE.

This sequence belongs to the serine-rich repeat protein (SRRP) family. In terms of assembly, binds to human and mouse protein keratin 10 (KRT10). Post-translationally, glycosylated. Only truncated substrates greater than 25 residues long are glycosylated by the Gtf1-Gtf2 complex in vitro; only Ser residues have been seen to be glycosylated. Based on electrophoretic mobility it is probable that most of the Ser residues in SSR1 and SSR2 are O-GlcNAcylated. Subsequent glycosylation by up to 7 sugar transferases (Gtf3 and GlyAT, GlyB, GlyD, GlyE, GlyF and GlyG) is able to generate very high sugar polymorphism. Can be cleaved by human furin protease; this fragment contributes to self-aggregation and possibly biofilm formation in vitro.

Its subcellular location is the secreted. The protein resides in the cell wall. It is found in the cell surface. Functionally, protein that allows bacteria to adhere to mammalian host cells. Required for full virulence in mouse infection models when infected intranasally. Required for adhesion to host cells in vitro and for persistence in the lower respiratory tract. Binds host keratin 10 (KRT10) on lung cells which mediates adhesion via the C-terminus of the basic region (BR, residues 273-341); glycosylation of either protein is not required for the interaction. A region in the N-terminus (residues 122-166) self aggregates, contributing to mature biofilm formation. The basic region (BR, residues 187-385) also self aggregates; the BR binds DNA which enhances self aggregation. This Streptococcus pneumoniae serotype 4 (strain ATCC BAA-334 / TIGR4) protein is Pneumococcal serine-rich repeat protein.